The following is an 881-amino-acid chain: Lon protease (881 aa).

Over residues 1–24 the composition is skewed to basic and acidic residues; the sequence is MAKNTDIEHDAHEPAGHGDVRESA. Residues 1 to 77 form a disordered region; the sequence is MAKNTDIEHD…RAGEAEKGVP (77 aa). Residues 49 to 59 are compositionally biased toward polar residues; the sequence is QTDTESAQGAA. Residues 65–77 are compositionally biased toward basic and acidic residues; it reads EVQRAGEAEKGVP. In terms of domain architecture, Lon N-terminal spans 94–287; sequence VHLIPLTGRP…EVFVYIKKEK (194 aa). 440 to 447 provides a ligand contact to ATP; it reads GPPGVGKT. Positions 679–861 constitute a Lon proteolytic domain; the sequence is ANKVGTAVGL…EEVLSLAFPK (183 aa). Active-site residues include Ser767 and Lys810.

This sequence belongs to the peptidase S16 family. As to quaternary structure, homohexamer. Organized in a ring with a central cavity.

It is found in the cytoplasm. It carries out the reaction Hydrolysis of proteins in presence of ATP.. ATP-dependent serine protease that mediates the selective degradation of mutant and abnormal proteins as well as certain short-lived regulatory proteins. Required for cellular homeostasis and for survival from DNA damage and developmental changes induced by stress. Degrades polypeptides processively to yield small peptide fragments that are 5 to 10 amino acids long. Binds to DNA in a double-stranded, site-specific manner. This Treponema pallidum (strain Nichols) protein is Lon protease.